The sequence spans 1444 residues: DNA polymerase III PolC-type (1444 aa).

The segment at 196–218 (EAVQVMQKRQAEGQNGNSSAAPL) is disordered. Residues 207-216 (EGQNGNSSAA) are compositionally biased toward polar residues. Residues 428 to 584 (YCVFDVETTG…FDAEATAYLA (157 aa)) form the Exonuclease domain.

Belongs to the DNA polymerase type-C family. PolC subfamily.

The protein localises to the cytoplasm. The enzyme catalyses DNA(n) + a 2'-deoxyribonucleoside 5'-triphosphate = DNA(n+1) + diphosphate. In terms of biological role, required for replicative DNA synthesis. This DNA polymerase also exhibits 3' to 5' exonuclease activity. The protein is DNA polymerase III PolC-type of Listeria welshimeri serovar 6b (strain ATCC 35897 / DSM 20650 / CCUG 15529 / CIP 8149 / NCTC 11857 / SLCC 5334 / V8).